The primary structure comprises 876 residues: GATOR2 complex protein MIOS (876 aa).

6 WD repeats span residues 59 to 101, 112 to 156, 182 to 222, 224 to 262, 266 to 307, and 400 to 440; these read SDTP…NSKS, KHAR…SPEA, GQND…QKTF, NTKA…KPVF, EQPK…MPFG, and RAQS…KQYT. The C4-type zinc-finger motif lies at 738-784; that stretch reads VSCNFCGKSISYSCSAMPHQGRGFSQYGVSGSPTKSKVTSCPGCRKP. Zn(2+) is bound by residues Cys-740, Cys-743, Cys-778, Cys-781, Cys-791, Cys-830, Cys-833, His-835, His-838, His-841, Cys-852, Cys-857, and Cys-861. The RING-type; atypical zinc-finger motif lies at 785–866; sequence LPRCALCLMN…CTCKCMQLDT (82 aa).

This sequence belongs to the WD repeat mio family. Component of the GATOR2 subcomplex, composed of MIOS, SEC13, SEH1L, WDR24 and WDR59. The GATOR2 complex interacts with CASTOR1 and CASTOR2; the interaction is negatively regulated by arginine. The GATOR2 complex interacts with SESN1, SESN2 and SESN3; the interaction is negatively regulated by amino acids. Interacts with SAR1; the interaction is direct, disrupted by leucine and mediates the interaction of SAR1 with the GATOR2 complex to negatively regulate the TORC1 signaling upon leucine deprivation.

The protein localises to the lysosome membrane. The GATOR2 complex is negatively regulated by the upstream amino acid sensors CASTOR1 and SESN2, which sequester the GATOR2 complex in absence of amino acids. In the presence of abundant amino acids, GATOR2 is released from CASTOR1 and SESN2 and activated. In terms of biological role, as a component of the GATOR2 complex, functions as an activator of the amino acid-sensing branch of the mTORC1 signaling pathway. The GATOR2 complex indirectly activates mTORC1 through the inhibition of the GATOR1 subcomplex. GATOR2 probably acts as an E3 ubiquitin-protein ligase toward GATOR1. In the presence of abundant amino acids, the GATOR2 complex mediates ubiquitination of the NPRL2 core component of the GATOR1 complex, leading to GATOR1 inactivation. In the absence of amino acids, GATOR2 is inhibited, activating the GATOR1 complex. Within the GATOR2 complex, MIOS is required to prevent autoubiquitination of WDR24, the catalytic subunit of the complex. In Danio rerio (Zebrafish), this protein is GATOR2 complex protein MIOS.